The following is a 41-amino-acid chain: Large ribosomal subunit protein bL36 (41 aa).

The protein belongs to the bacterial ribosomal protein bL36 family.

The polypeptide is Large ribosomal subunit protein bL36 (Rhizobium etli (strain CIAT 652)).